The sequence spans 130 residues: Fluoride-specific ion channel FluC (130 aa).

Helical transmembrane passes span Leu3 to Gly23, Leu38 to Ala58, Phe67 to Leu87, and Ile102 to Leu122. Residues Gly77 and Thr80 each coordinate Na(+).

The protein belongs to the fluoride channel Fluc/FEX (TC 1.A.43) family.

The protein localises to the cell inner membrane. It catalyses the reaction fluoride(in) = fluoride(out). With respect to regulation, na(+) is not transported, but it plays an essential structural role and its presence is essential for fluoride channel function. Fluoride-specific ion channel. Important for reducing fluoride concentration in the cell, thus reducing its toxicity. The protein is Fluoride-specific ion channel FluC of Helicobacter pylori (strain J99 / ATCC 700824) (Campylobacter pylori J99).